We begin with the raw amino-acid sequence, 85 residues long: Putative N.vectensis toxin 1 9 (85 aa).

An N-terminal signal peptide occupies residues 1 to 20 (MASFKIVIVCLALLVAVASA). A propeptide spanning residues 21–36 (RRRDMMSDDELDYHFS) is cleaved from the precursor. Cystine bridges form between Cys-42–Cys-82, Cys-44–Cys-72, and Cys-65–Cys-83.

Belongs to the sea anemone sodium channel inhibitory toxin family. Type II subfamily. As to expression, expressed in ectodermal glands and in clumps outside of the extodermal layer. Is not expressed in nematocytes. In adult female tissues, shows similar expression levels in mesenteries (gametes-producing tissue), tentacles, pharynx and physa.

It localises to the secreted. In terms of biological role, binds to site 3 of voltage-gated sodium channels and inhibits the inactivation process. Is highly active on DmNav1/TipE (drosophila) and is only extremely weakly active on rat Nav1.4-beta-1/SCN4A-SCN1B, and on human Nav1.5-beta-1/SCN5A-beta-1. This reveals high specificity for arthropod over mammalian channels. In vivo, when released into the medium, this recombinant toxin induces impaired swimming, paralysis and death of the crustacean A.nauplii within several hours. Also causes paralysis of cherry shrimps immediately after injection at very low doses. Its effect on zebrafish (D.rerio) larvae is also rapid, since it induces tail twitching accompanied by impaired swimming after 20 minutes and complete paralysis within 45 minutes. It has also been observed to cause death of zebrafish larvae within 1 hour. The sequence is that of Putative N.vectensis toxin 1 9 from Nematostella vectensis (Starlet sea anemone).